We begin with the raw amino-acid sequence, 404 residues long: MLLEQLRRAAEQRHALALTRRRRVAHTACAPHQAVGEDGSEPESLLTFCSNDYMGLANHPDVIAALVEGAQRYGAGSGASHLVSGHSLAHTQLEAELARWLAPHIPHACTLYFCTGYMANMAVLTALGTAGATLFCESLNHASLIDGARLARADVQRYPHCDTAALEALLAASTSERKLIVTDSVFSMDGNVAPLRKLLELAERHDAWIIVDDAHGFGVLGEQGHGVLEALGLSSERLIYIGTLGKAAGVAGAFVAAHETIIEHLVNTARPYIYTTAAPPAVAHALLASLAIIEGEEGTQRRAQLTRCIGMLREGLAQLAAIAGWTLGDSETAIQPLIVGDNGAALALSATLEADGIRVGAIRPPTVPEGTARLRITLSAAHTEDDVRRLLDALSAAVAQREVA.

Position 20 (arginine 20) interacts with substrate. Residue 116 to 117 coordinates pyridoxal 5'-phosphate; sequence GY. Histidine 141 contacts substrate. Pyridoxal 5'-phosphate-binding residues include serine 187, histidine 215, and threonine 243. Residue lysine 246 is modified to N6-(pyridoxal phosphate)lysine. Threonine 366 serves as a coordination point for substrate.

This sequence belongs to the class-II pyridoxal-phosphate-dependent aminotransferase family. BioF subfamily. Homodimer. The cofactor is pyridoxal 5'-phosphate.

The enzyme catalyses 6-carboxyhexanoyl-[ACP] + L-alanine + H(+) = (8S)-8-amino-7-oxononanoate + holo-[ACP] + CO2. Its pathway is cofactor biosynthesis; biotin biosynthesis. In terms of biological role, catalyzes the decarboxylative condensation of pimeloyl-[acyl-carrier protein] and L-alanine to produce 8-amino-7-oxononanoate (AON), [acyl-carrier protein], and carbon dioxide. The polypeptide is 8-amino-7-oxononanoate synthase (Cupriavidus necator (strain ATCC 17699 / DSM 428 / KCTC 22496 / NCIMB 10442 / H16 / Stanier 337) (Ralstonia eutropha)).